Here is a 79-residue protein sequence, read N- to C-terminus: Sulfur carrier protein TusA (79 aa).

C16 functions as the Cysteine persulfide intermediate in the catalytic mechanism.

The protein belongs to the sulfur carrier protein TusA family.

It is found in the cytoplasm. Sulfur carrier protein which probably makes part of a sulfur-relay system. The chain is Sulfur carrier protein TusA from Pseudomonas paraeruginosa (strain DSM 24068 / PA7) (Pseudomonas aeruginosa (strain PA7)).